A 544-amino-acid polypeptide reads, in one-letter code: Chaperonin GroEL (544 aa).

ATP contacts are provided by residues 30–33, lysine 51, 87–91, glycine 415, and aspartate 495; these read TLGP and DGTTT.

Belongs to the chaperonin (HSP60) family. In terms of assembly, forms a cylinder of 14 subunits composed of two heptameric rings stacked back-to-back. Interacts with the co-chaperonin GroES.

The protein resides in the cytoplasm. The catalysed reaction is ATP + H2O + a folded polypeptide = ADP + phosphate + an unfolded polypeptide.. In terms of biological role, together with its co-chaperonin GroES, plays an essential role in assisting protein folding. The GroEL-GroES system forms a nano-cage that allows encapsulation of the non-native substrate proteins and provides a physical environment optimized to promote and accelerate protein folding. The polypeptide is Chaperonin GroEL (Agrobacterium fabrum (strain C58 / ATCC 33970) (Agrobacterium tumefaciens (strain C58))).